The following is an 84-amino-acid chain: UPF0291 protein EUBELI_00985 (84 aa).

Belongs to the UPF0291 family.

The protein resides in the cytoplasm. This is UPF0291 protein EUBELI_00985 from Lachnospira eligens (strain ATCC 27750 / DSM 3376 / VPI C15-48 / C15-B4) (Eubacterium eligens).